Consider the following 349-residue polypeptide: Dihydroorotate dehydrogenase (quinone) (349 aa).

FMN-binding positions include 65–69 (AGFDK) and Ala-89. Residue Lys-69 participates in substrate binding. Position 114–118 (114–118 (NRMGF)) interacts with substrate. Residues Asn-143 and Asn-176 each contribute to the FMN site. Asn-176 contacts substrate. Ser-179 (nucleophile) is an active-site residue. Asn-181 lines the substrate pocket. Lys-212 and Thr-240 together coordinate FMN. A substrate-binding site is contributed by 241–242 (NT). The disordered stretch occupies residues 244 to 265 (TERPESLSHPHAGEQGGLSGAP). Basic and acidic residues predominate over residues 245-255 (ERPESLSHPHA). Residues Gly-263, Gly-290, and 311 to 312 (YT) contribute to the FMN site.

This sequence belongs to the dihydroorotate dehydrogenase family. Type 2 subfamily. In terms of assembly, monomer. Requires FMN as cofactor.

It is found in the cell membrane. It catalyses the reaction (S)-dihydroorotate + a quinone = orotate + a quinol. Its pathway is pyrimidine metabolism; UMP biosynthesis via de novo pathway; orotate from (S)-dihydroorotate (quinone route): step 1/1. In terms of biological role, catalyzes the conversion of dihydroorotate to orotate with quinone as electron acceptor. This is Dihydroorotate dehydrogenase (quinone) from Halobacterium salinarum (strain ATCC 29341 / DSM 671 / R1).